Here is a 1144-residue protein sequence, read N- to C-terminus: MTEDQGFSDPEYSAEYSAEYSVSLPSDPDRGVGRTHEISVRNSGSCLCLPRFMRLTFVPESLENLYQTYFKRQRHETLLVLVVFAALFDCYVVVMCAVVFSSDKLAPLMVAGVGLVLDIILFVLCKKGLLPDRVSRKVVPYLLWLLITAQIFSYLGLNFSRAHAASDTVGWQAFFVFSFFITLPLSLSPIVIISVVSCVVHTLVLGVTVAQQQQDELEGMQLLREILANVFLYLCAIIVGIMSYYMADRKHRKAFLEARQSLEVKMNLEEQSQQQENLMLSILPKHVADEMLKDMKKDESQKDQQQFNTMYMYRHENVSILFADIVGFTQLSSACSAQELVKLLNELFARFDKLAAKYHQLRIKILGDCYYCICGLPDYREDHAVCSILMGLAMVEAISYVREKTKTGVDMRVGVHTGTVLGGVLGQKRWQYDVWSTDVTVANKMEAGGIPGRVHISQSTMDCLKGEFDVEPGDGGSRCDYLDEKGIETYLIIASKPEVKKTAQNGLNGSALPNGAPASKPSSPALIETKEPNGSAHASGSTSEEAEEQEAQADNPSFPNPRRRLRLQDLADRVVDASEDEHELNQLLNEALLERESAQVVKKRNTFLLTMRFMDPEMETRYSVEKEKQSGAAFSCSCVVLFCTAMVEILIDPWLMTNYVTFVVGEVLLLILTICSMAAIFPRAFPKKLVAFSSWIDRTRWARNTWAMLAIFILVMANVVDMLSCLQYYMGPYNVTTGIELDGGCMENPKYYNYVAVLSLIATIMLVQVSHMVKLTLMLLVTGAVTAINLYAWCPVFDEYDHKRFQEKDSPMVALEKMQVLSTPGLNGTDSRLPLVPSKYSMTVMMFVMMLSFYYFSRHVEKLARTLFLWKIEVHDQKERVYEMRRWNEALVTNMLPEHVARHFLGSKKRDEELYSQSYDEIGVMFASLPNFADFYTEESINNGGIECLRFLNEIISDFDSLLDNPKFRVITKIKTIGSTYMAASGVTPDVNTNGFTSSSKEEKSDKERWQHLADLADFALAMKDTLTNINNQSFNNFMLRIGMNKGGVLAGVIGARKPHYDIWGNTVNVASRMESTGVMGNIQVVEETQVILREYGFRFVRRGPIFVKGKGELLTFFLKGRDRPAAFPNGSSVTLPHQVVDNP.

Residues M1–L79 lie on the Cytoplasmic side of the membrane. The next 5 membrane-spanning stretches (helical) occupy residues V80–F100, L105–C125, V139–F159, A173–I193, and I226–M246. Mg(2+) contacts are provided by D324, I325, and D368. Residues D324 to T329 and L366 to D368 each bind ATP. Residues E381–V401 traverse the membrane as a helical segment. At R402 to S630 the chain is on the cytoplasmic side. An ATP-binding site is contributed by R412. K465 is covalently cross-linked (Glycyl lysine isopeptide (Lys-Gly) (interchain with G-Cter in SUMO3)). Residues Q504 to R563 form a disordered region. Residue S523 is modified to Phosphoserine. Residues G534–S543 are compositionally biased toward low complexity. S578 is subject to Phosphoserine. 3 consecutive transmembrane segments (helical) span residues G631 to I651, F662 to P682, and W706 to L726. The N-linked (GlcNAc...) asparagine glycan is linked to N734. The next 3 membrane-spanning stretches (helical) occupy residues V755–L775, L777–F797, and L833–F853. The Cytoplasmic portion of the chain corresponds to Y854–P1144. Residues K975, D1062–W1064, and N1069–R1073 each bind ATP. S1076 bears the Phosphoserine; by CaMK2 mark. K1109 lines the ATP pocket.

The protein belongs to the adenylyl cyclase class-4/guanylyl cyclase family. Requires Mg(2+) as cofactor. It depends on Mn(2+) as a cofactor. N-glycosylated. Post-translationally, sumoylated. Sumoylation is required for targeting ot olfactory cilia. In terms of processing, rapidly phosphorylated after stimulation by odorants or forskolin. Phosphorylation by CaMK2 at Ser-1076 down-regulates enzyme activity. In terms of tissue distribution, detected on cilia on the olfactory epithelium (at protein level). Detected on cilia on the olfactory epithelium.

It localises to the cell membrane. The protein localises to the golgi apparatus. It is found in the cell projection. The protein resides in the cilium. Its subcellular location is the cytoplasm. It carries out the reaction ATP = 3',5'-cyclic AMP + diphosphate. Its activity is regulated as follows. Specifically activated by the G alpha protein GNAL/G(olf) in signaling cascades triggered by odorant receptors. Activated by forskolin. After forskolin treatment, activity is further increased by calcium/calmodulin. In the absence of forskolin, calcium/calmodulin has little effect on enzyme activity. Catalyzes the formation of the signaling molecule cAMP in response to G-protein signaling. Participates in signaling cascades triggered by odorant receptors via its function in cAMP biosynthesis: specifically activated by G alpha protein GNAL/G(olf) in olfactory epithelium. Required for the perception of odorants. Required for normal sperm motility and normal male fertility. Plays a role in regulating insulin levels and body fat accumulation in response to a high fat diet. The protein is Adenylate cyclase type 3 of Rattus norvegicus (Rat).